An 81-amino-acid chain; its full sequence is RSRSRSRRSSRSRSRSISKSRSRSRSRSKGRSRSRSKGRKSRSKSKSKPKSDRGSRSRSRSRSKDEYEKSRSRSRSRSRSP.

Positions 1-48 are enriched in basic residues; it reads RSRSRSRRSSRSRSRSISKSRSRSRSRSKGRSRSRSKGRKSRSKSKSK. Positions 1-81 are disordered; sequence RSRSRSRRSS…SRSRSRSRSP (81 aa). Positions 62 to 71 are enriched in basic and acidic residues; sequence RSKDEYEKSR. Over residues 72 to 81 the composition is skewed to basic residues; the sequence is SRSRSRSRSP.

Belongs to the splicing factor SR family. In terms of assembly, binds SREK1/SFRS12. Interacts with DYRK1A. Post-translationally, extensively phosphorylated on serine residues in the RS domain. Phosphorylated by DYRK1A, probably in the RS domain. Phosphorylation by DYRK1A modulates alternative splice site selection and inhibits the expression of MAPT/Tau exon 10.

The protein resides in the nucleus. Its subcellular location is the nucleus speckle. Its function is as follows. Plays a role in constitutive splicing and modulates the selection of alternative splice sites. Plays a role in the alternative splicing of MAPT/Tau exon 10. Binds to alternative exons of TNC pre-mRNA and promotes the expression of alternatively spliced TNC. Plays a role in wound healing and in the regulation of keratinocyte differentiation and proliferation via its role in alternative splicing. This is Serine/arginine-rich splicing factor 6 (SRSF6) from Oryctolagus cuniculus (Rabbit).